Consider the following 425-residue polypeptide: Serine--tRNA ligase (425 aa).

228–230 (TAE) is an L-serine binding site. 259-261 (RSE) serves as a coordination point for ATP. E282 provides a ligand contact to L-serine. 346 to 349 (EIAS) is an ATP binding site. S382 serves as a coordination point for L-serine.

This sequence belongs to the class-II aminoacyl-tRNA synthetase family. Type-1 seryl-tRNA synthetase subfamily. In terms of assembly, homodimer. The tRNA molecule binds across the dimer.

The protein localises to the cytoplasm. It catalyses the reaction tRNA(Ser) + L-serine + ATP = L-seryl-tRNA(Ser) + AMP + diphosphate + H(+). The enzyme catalyses tRNA(Sec) + L-serine + ATP = L-seryl-tRNA(Sec) + AMP + diphosphate + H(+). Its pathway is aminoacyl-tRNA biosynthesis; selenocysteinyl-tRNA(Sec) biosynthesis; L-seryl-tRNA(Sec) from L-serine and tRNA(Sec): step 1/1. Its function is as follows. Catalyzes the attachment of serine to tRNA(Ser). Is also able to aminoacylate tRNA(Sec) with serine, to form the misacylated tRNA L-seryl-tRNA(Sec), which will be further converted into selenocysteinyl-tRNA(Sec). The protein is Serine--tRNA ligase of Rickettsia akari (strain Hartford).